Reading from the N-terminus, the 416-residue chain is CinA-like protein (416 aa).

The protein belongs to the CinA family.

The protein is CinA-like protein of Nostoc punctiforme (strain ATCC 29133 / PCC 73102).